Consider the following 89-residue polypeptide: Heat shock protein 30A (89 aa).

Basic and acidic residues-rich tracts occupy residues 1–11 and 19–39; these read MRNNVERRMQR and LSKDTEMRRITDQNRQSRESE. The interval 1–55 is disordered; that stretch reads MRNNVERRMQRVNEACRLLSKDTEMRRITDQNRQSRESEGTSPNSGKDGKDHFEL. A sHSP domain is found at 35-89; sequence SRESEGTSPNSGKDGKDHFELTLNVRDFSPHELTVKTQGRRVIVTGKHERKSDTE.

Belongs to the small heat shock protein (HSP20) family.

The protein is Heat shock protein 30A (hsp30a) of Xenopus laevis (African clawed frog).